We begin with the raw amino-acid sequence, 364 residues long: tRNA 2-selenouridine synthase (364 aa).

The Rhodanese domain maps to 14-137 (LLADTPLIDV…LRQTAIQATW (124 aa)). Cysteine 97 serves as the catalytic S-selanylcysteine intermediate.

Belongs to the SelU family. Monomer.

It catalyses the reaction 5-methylaminomethyl-2-thiouridine(34) in tRNA + selenophosphate + (2E)-geranyl diphosphate + H2O + H(+) = 5-methylaminomethyl-2-selenouridine(34) in tRNA + (2E)-thiogeraniol + phosphate + diphosphate. It carries out the reaction 5-methylaminomethyl-2-thiouridine(34) in tRNA + (2E)-geranyl diphosphate = 5-methylaminomethyl-S-(2E)-geranyl-thiouridine(34) in tRNA + diphosphate. The enzyme catalyses 5-methylaminomethyl-S-(2E)-geranyl-thiouridine(34) in tRNA + selenophosphate + H(+) = 5-methylaminomethyl-2-(Se-phospho)selenouridine(34) in tRNA + (2E)-thiogeraniol. The catalysed reaction is 5-methylaminomethyl-2-(Se-phospho)selenouridine(34) in tRNA + H2O = 5-methylaminomethyl-2-selenouridine(34) in tRNA + phosphate. Involved in the post-transcriptional modification of the uridine at the wobble position (U34) of tRNA(Lys), tRNA(Glu) and tRNA(Gln). Catalyzes the conversion of 2-thiouridine (S2U-RNA) to 2-selenouridine (Se2U-RNA). Acts in a two-step process involving geranylation of 2-thiouridine (S2U) to S-geranyl-2-thiouridine (geS2U) and subsequent selenation of the latter derivative to 2-selenouridine (Se2U) in the tRNA chain. This Salmonella agona (strain SL483) protein is tRNA 2-selenouridine synthase.